The primary structure comprises 386 residues: S-adenosylmethionine synthase (386 aa).

His14 contributes to the ATP binding site. Residue Asp16 coordinates Mg(2+). A K(+)-binding site is contributed by Glu42. Residues Glu55 and Gln98 each coordinate L-methionine. Residues 98–108 form a flexible loop region; that stretch reads QSGDISQGVDG. Residues 162–164, 230–231, Asp239, 245–246, Ala262, and Lys266 each bind ATP; these read DSK, RF, and RK. Asp239 is a binding site for L-methionine. Lys270 is a binding site for L-methionine.

This sequence belongs to the AdoMet synthase family. As to quaternary structure, homotetramer; dimer of dimers. It depends on Mg(2+) as a cofactor. Requires K(+) as cofactor.

The protein resides in the cytoplasm. It catalyses the reaction L-methionine + ATP + H2O = S-adenosyl-L-methionine + phosphate + diphosphate. The protein operates within amino-acid biosynthesis; S-adenosyl-L-methionine biosynthesis; S-adenosyl-L-methionine from L-methionine: step 1/1. In terms of biological role, catalyzes the formation of S-adenosylmethionine (AdoMet) from methionine and ATP. The overall synthetic reaction is composed of two sequential steps, AdoMet formation and the subsequent tripolyphosphate hydrolysis which occurs prior to release of AdoMet from the enzyme. The sequence is that of S-adenosylmethionine synthase from Salinibacter ruber (strain DSM 13855 / M31).